The sequence spans 183 residues: Dual-action ribosomal maturation protein DarP (183 aa).

The disordered stretch occupies residues 1–20; sequence MKQKYEDWLNDVPDNQEDDE.

The protein belongs to the DarP family.

It is found in the cytoplasm. Functionally, member of a network of 50S ribosomal subunit biogenesis factors which assembles along the 30S-50S interface, preventing incorrect 23S rRNA structures from forming. Promotes peptidyl transferase center (PTC) maturation. In Pectobacterium carotovorum subsp. carotovorum (strain PC1), this protein is Dual-action ribosomal maturation protein DarP.